The primary structure comprises 445 residues: Ribosomal protein uS12 methylthiotransferase RimO (445 aa).

One can recognise an MTTase N-terminal domain in the interval 10 to 120 (PKVGFVSLGC…VVNAVHEVVP (111 aa)). [4Fe-4S] cluster is bound by residues cysteine 19, cysteine 55, cysteine 84, cysteine 153, cysteine 157, and cysteine 160. One can recognise a Radical SAM core domain in the interval 139–378 (LTPRHYAYLK…AHQQAISSAR (240 aa)). In terms of domain architecture, TRAM spans 380–445 (QLRIGREIEV…DEYDLWAEQI (66 aa)).

It belongs to the methylthiotransferase family. RimO subfamily. Requires [4Fe-4S] cluster as cofactor.

The protein resides in the cytoplasm. The catalysed reaction is L-aspartate(89)-[ribosomal protein uS12]-hydrogen + (sulfur carrier)-SH + AH2 + 2 S-adenosyl-L-methionine = 3-methylsulfanyl-L-aspartate(89)-[ribosomal protein uS12]-hydrogen + (sulfur carrier)-H + 5'-deoxyadenosine + L-methionine + A + S-adenosyl-L-homocysteine + 2 H(+). In terms of biological role, catalyzes the methylthiolation of an aspartic acid residue of ribosomal protein uS12. This Pseudomonas fluorescens (strain Pf0-1) protein is Ribosomal protein uS12 methylthiotransferase RimO.